The chain runs to 252 residues: 3-dehydroquinate dehydratase (252 aa).

3-dehydroquinate contacts are provided by residues 47–49 (EWR) and arginine 83. Histidine 144 functions as the Proton donor/acceptor in the catalytic mechanism. Lysine 171 serves as the catalytic Schiff-base intermediate with substrate. 3-dehydroquinate contacts are provided by arginine 213, serine 232, and glutamine 236.

It belongs to the type-I 3-dehydroquinase family. Homodimer.

It catalyses the reaction 3-dehydroquinate = 3-dehydroshikimate + H2O. Its pathway is metabolic intermediate biosynthesis; chorismate biosynthesis; chorismate from D-erythrose 4-phosphate and phosphoenolpyruvate: step 3/7. Its function is as follows. Involved in the third step of the chorismate pathway, which leads to the biosynthesis of aromatic amino acids. Catalyzes the cis-dehydration of 3-dehydroquinate (DHQ) and introduces the first double bond of the aromatic ring to yield 3-dehydroshikimate. The polypeptide is 3-dehydroquinate dehydratase (Lactiplantibacillus plantarum (strain ATCC BAA-793 / NCIMB 8826 / WCFS1) (Lactobacillus plantarum)).